The following is a 149-amino-acid chain: Large ribosomal subunit protein bL9 (149 aa).

Belongs to the bacterial ribosomal protein bL9 family.

In terms of biological role, binds to the 23S rRNA. This Desulforamulus reducens (strain ATCC BAA-1160 / DSM 100696 / MI-1) (Desulfotomaculum reducens) protein is Large ribosomal subunit protein bL9.